Here is a 206-residue protein sequence, read N- to C-terminus: Octanoyltransferase (206 aa).

In terms of domain architecture, BPL/LPL catalytic spans 30 to 206 (PETNDEIWLV…EFVTLLNNSI (177 aa)). Substrate-binding positions include 69–76 (RGGQVTYH), 137–139 (SLG), and 150–152 (GIA). Residue C168 is the Acyl-thioester intermediate of the active site.

Belongs to the LipB family.

It is found in the cytoplasm. It carries out the reaction octanoyl-[ACP] + L-lysyl-[protein] = N(6)-octanoyl-L-lysyl-[protein] + holo-[ACP] + H(+). The protein operates within protein modification; protein lipoylation via endogenous pathway; protein N(6)-(lipoyl)lysine from octanoyl-[acyl-carrier-protein]: step 1/2. Its function is as follows. Catalyzes the transfer of endogenously produced octanoic acid from octanoyl-acyl-carrier-protein onto the lipoyl domains of lipoate-dependent enzymes. Lipoyl-ACP can also act as a substrate although octanoyl-ACP is likely to be the physiological substrate. The chain is Octanoyltransferase from Francisella tularensis subsp. holarctica (strain FTNF002-00 / FTA).